The primary structure comprises 84 residues: ATP synthase subunit c (84 aa).

Helical transmembrane passes span 8 to 28 (VAGM…GGGI) and 56 to 76 (IIGS…AILL).

It belongs to the ATPase C chain family. F-type ATPases have 2 components, F(1) - the catalytic core - and F(0) - the membrane proton channel. F(1) has five subunits: alpha(3), beta(3), gamma(1), delta(1), epsilon(1). F(0) has three main subunits: a(1), b(2) and c(10-14). The alpha and beta chains form an alternating ring which encloses part of the gamma chain. F(1) is attached to F(0) by a central stalk formed by the gamma and epsilon chains, while a peripheral stalk is formed by the delta and b chains.

The protein localises to the cell membrane. In terms of biological role, f(1)F(0) ATP synthase produces ATP from ADP in the presence of a proton or sodium gradient. F-type ATPases consist of two structural domains, F(1) containing the extramembraneous catalytic core and F(0) containing the membrane proton channel, linked together by a central stalk and a peripheral stalk. During catalysis, ATP synthesis in the catalytic domain of F(1) is coupled via a rotary mechanism of the central stalk subunits to proton translocation. Key component of the F(0) channel; it plays a direct role in translocation across the membrane. A homomeric c-ring of between 10-14 subunits forms the central stalk rotor element with the F(1) delta and epsilon subunits. The chain is ATP synthase subunit c from Clostridium novyi (strain NT).